Reading from the N-terminus, the 329-residue chain is Ketol-acid reductoisomerase (NADP(+)) (329 aa).

Residues 2-181 (VQKYYESDAD…GATRAVVFET (180 aa)) form the KARI N-terminal Rossmann domain. Residues 25-28 (YGSQ), arginine 48, serine 52, and 82-85 (DENQ) each bind NADP(+). The active site involves histidine 107. Position 133 (glycine 133) interacts with NADP(+). Residues 182–327 (TFAEETETDL…AEIRGFMPQF (146 aa)) enclose the KARI C-terminal knotted domain. 4 residues coordinate Mg(2+): aspartate 190, glutamate 194, glutamate 226, and glutamate 230. Residue serine 251 coordinates substrate.

The protein belongs to the ketol-acid reductoisomerase family. Requires Mg(2+) as cofactor.

It catalyses the reaction (2R)-2,3-dihydroxy-3-methylbutanoate + NADP(+) = (2S)-2-acetolactate + NADPH + H(+). The catalysed reaction is (2R,3R)-2,3-dihydroxy-3-methylpentanoate + NADP(+) = (S)-2-ethyl-2-hydroxy-3-oxobutanoate + NADPH + H(+). It participates in amino-acid biosynthesis; L-isoleucine biosynthesis; L-isoleucine from 2-oxobutanoate: step 2/4. It functions in the pathway amino-acid biosynthesis; L-valine biosynthesis; L-valine from pyruvate: step 2/4. In terms of biological role, involved in the biosynthesis of branched-chain amino acids (BCAA). Catalyzes an alkyl-migration followed by a ketol-acid reduction of (S)-2-acetolactate (S2AL) to yield (R)-2,3-dihydroxy-isovalerate. In the isomerase reaction, S2AL is rearranged via a Mg-dependent methyl migration to produce 3-hydroxy-3-methyl-2-ketobutyrate (HMKB). In the reductase reaction, this 2-ketoacid undergoes a metal-dependent reduction by NADPH to yield (R)-2,3-dihydroxy-isovalerate. The polypeptide is Ketol-acid reductoisomerase (NADP(+)) (Methanoculleus marisnigri (strain ATCC 35101 / DSM 1498 / JR1)).